The primary structure comprises 34 residues: Mytilin-B (34 aa).

Disulfide bonds link cysteine 2-cysteine 27, cysteine 6-cysteine 29, cysteine 10-cysteine 31, and cysteine 15-cysteine 34.

The protein resides in the secreted. Has antibacterial and antiviral activity. The polypeptide is Mytilin-B (Mytilus edulis (Blue mussel)).